We begin with the raw amino-acid sequence, 414 residues long: uncharacterized protein (414 aa).

At M1–K66 the chain is on the lumenal side. The tract at residues S20 to D51 is disordered. Over residues D25–D51 the composition is skewed to polar residues. K40 participates in a covalent cross-link: Glycyl lysine isopeptide (Lys-Gly) (interchain with G-Cter in ubiquitin). Residues P67–S87 form a helical membrane-spanning segment. The 138-residue stretch at Y78 to R215 folds into the EamA 1 domain. Residues T88–P106 lie on the Cytoplasmic side of the membrane. Residues L107 to I127 form a helical membrane-spanning segment. Residues N128 to K144 lie on the Lumenal side of the membrane. The helical transmembrane segment at W145–L167 threads the bilayer. Residues T168–D171 are Cytoplasmic-facing. The helical transmembrane segment at A172–L191 threads the bilayer. The Lumenal portion of the chain corresponds to R192–E199. A helical membrane pass occupies residues A200–F220. Topologically, residues G221 to R241 are cytoplasmic. A helical transmembrane segment spans residues L242–I262. Residues L253–R379 form the EamA 2 domain. The Lumenal portion of the chain corresponds to R263–A269. The helical transmembrane segment at H270–I290 threads the bilayer. Residues N291–W307 lie on the Cytoplasmic side of the membrane. A helical transmembrane segment spans residues I308–I328. Residues Q329 to H357 lie on the Lumenal side of the membrane. Residues W358–I378 traverse the membrane as a helical segment. Residues R379–K414 are Cytoplasmic-facing.

The protein to yeast YPL264c.

The protein resides in the membrane. This is an uncharacterized protein from Saccharomyces cerevisiae (strain ATCC 204508 / S288c) (Baker's yeast).